The primary structure comprises 424 residues: Inhibin beta A chain (424 aa).

The N-terminal stretch at Met1–Ser20 is a signal peptide. A propeptide spanning residues Ser21 to Arg308 is cleaved from the precursor. An N-linked (GlcNAc...) asparagine glycan is attached at Asn165. Disordered stretches follow at residues Gln178–Glu200 and Lys260–Arg288. Residues Lys263–Gly275 are compositionally biased toward basic and acidic residues. 4 disulfide bridges follow: Cys312–Cys320, Cys319–Cys389, Cys348–Cys421, and Cys352–Cys423.

It belongs to the TGF-beta family. Dimeric, linked by one or more disulfide bonds. Inhibin A is a dimer of alpha and beta-A. Inhibin B is a dimer of alpha and beta-B. Activin A is a homodimer of beta-A. Activin B is a homodimer of beta-B. Activin AB is a dimer of beta-A and beta-B. In terms of tissue distribution, ciliary ganglion neurons. Levels are higher in the choroid than the iris.

It is found in the secreted. Functionally, inhibins and activins inhibit and activate, respectively, the secretion of follitropin by the pituitary gland. Inhibins/activins are involved in regulating a number of diverse functions such as hypothalamic and pituitary hormone secretion, gonadal hormone secretion, germ cell development and maturation, erythroid differentiation, insulin secretion, nerve cell survival, embryonic axial development or bone growth, depending on their subunit composition. Inhibins appear to oppose the functions of activins. Induces somatostatin in the ciliary ganglion neurons and may play a role in regulating neurotransmitter phenotype. This Gallus gallus (Chicken) protein is Inhibin beta A chain (INHBA).